We begin with the raw amino-acid sequence, 360 residues long: Phospho-N-acetylmuramoyl-pentapeptide-transferase (360 aa).

10 helical membrane-spanning segments follow: residues 26-46 (AIVSLLTALFISLWMGPRLIA), 72-92 (PTMGGIMILTSIVVSVLLWAY), 94-114 (SNPYVWCVLFVLVGYGAVGFV), 132-152 (WKYFWMSLIALTVAFALYITG), 168-188 (VMPQLGIFYVLLAYFVIVGTG), 199-219 (GLAIMPTVLVAGGFALVAWAT), 236-256 (AGELVIVCTAIVGAGLGFLWF), 263-283 (VFMGDVGSLALGGALGIIAVL), 288-308 (FLLVIMGGVFVVETLSVILQV), and 338-358 (VIVRFWVISLMLVLIGLATLK).

It belongs to the glycosyltransferase 4 family. MraY subfamily. The cofactor is Mg(2+).

It localises to the cell inner membrane. The enzyme catalyses UDP-N-acetyl-alpha-D-muramoyl-L-alanyl-gamma-D-glutamyl-meso-2,6-diaminopimeloyl-D-alanyl-D-alanine + di-trans,octa-cis-undecaprenyl phosphate = di-trans,octa-cis-undecaprenyl diphospho-N-acetyl-alpha-D-muramoyl-L-alanyl-D-glutamyl-meso-2,6-diaminopimeloyl-D-alanyl-D-alanine + UMP. It participates in cell wall biogenesis; peptidoglycan biosynthesis. In terms of biological role, catalyzes the initial step of the lipid cycle reactions in the biosynthesis of the cell wall peptidoglycan: transfers peptidoglycan precursor phospho-MurNAc-pentapeptide from UDP-MurNAc-pentapeptide onto the lipid carrier undecaprenyl phosphate, yielding undecaprenyl-pyrophosphoryl-MurNAc-pentapeptide, known as lipid I. This chain is Phospho-N-acetylmuramoyl-pentapeptide-transferase, found in Cronobacter sakazakii (strain ATCC BAA-894) (Enterobacter sakazakii).